Reading from the N-terminus, the 346-residue chain is Leucine zipper protein 2 (346 aa).

A signal peptide spans 1–19; that stretch reads MKFSPAHYLLPLLPALVLS. Positions 16–211 form a coiled coil; sequence LVLSTRQDYE…QMKAMKETVQ (196 aa). An N-linked (GlcNAc...) asparagine glycan is attached at N133. A leucine-zipper region spans residues 164–192; it reads LRYGKKDLLFKAQQLTDLEQKLAVAKNEL. Positions 225-346 are disordered; that stretch reads ALSLITSNPT…GMAAREEKIL (122 aa). Over residues 250 to 261 the composition is skewed to low complexity; it reads AAAKSKPQQSAS. The segment covering 262-283 has biased composition (polar residues); that stretch reads GNNESSQVESTKEGSPSTTACD. N264 is a glycosylation site (N-linked (GlcNAc...) asparagine). Residues 286 to 298 are compositionally biased toward basic and acidic residues; sequence DEGRTCSIKHKES. N-linked (GlcNAc...) asparagine glycosylation is present at N302.

It is found in the secreted. The protein is Leucine zipper protein 2 (LUZP2) of Pongo abelii (Sumatran orangutan).